A 272-amino-acid polypeptide reads, in one-letter code: Indole-3-glycerol phosphate synthase (272 aa).

It belongs to the TrpC family.

It catalyses the reaction 1-(2-carboxyphenylamino)-1-deoxy-D-ribulose 5-phosphate + H(+) = (1S,2R)-1-C-(indol-3-yl)glycerol 3-phosphate + CO2 + H2O. It participates in amino-acid biosynthesis; L-tryptophan biosynthesis; L-tryptophan from chorismate: step 4/5. The protein is Indole-3-glycerol phosphate synthase of Mycobacterium ulcerans (strain Agy99).